The sequence spans 312 residues: Small ribosomal subunit biogenesis GTPase RsgA (312 aa).

The CP-type G domain maps to 86–245 (QSFLKRPAVA…LADTPGFNRP (160 aa)). GTP contacts are provided by residues 135–138 (TKID) and 187–195 (GPSGVGKTS). The Zn(2+) site is built by cysteine 270, cysteine 275, histidine 277, and cysteine 283.

This sequence belongs to the TRAFAC class YlqF/YawG GTPase family. RsgA subfamily. Monomer. Associates with 30S ribosomal subunit, binds 16S rRNA. Zn(2+) serves as cofactor.

It is found in the cytoplasm. One of several proteins that assist in the late maturation steps of the functional core of the 30S ribosomal subunit. Helps release RbfA from mature subunits. May play a role in the assembly of ribosomal proteins into the subunit. Circularly permuted GTPase that catalyzes slow GTP hydrolysis, GTPase activity is stimulated by the 30S ribosomal subunit. In Prochlorococcus marinus (strain NATL2A), this protein is Small ribosomal subunit biogenesis GTPase RsgA.